A 545-amino-acid chain; its full sequence is Probable protein kinase UbiB (545 aa).

Positions 123–501 (DFDIVPLASA…RVRQHQSHYL (379 aa)) constitute a Protein kinase domain. ATP contacts are provided by residues 129 to 137 (LASASIAQV) and Lys-152. Asp-287 acts as the Proton acceptor in catalysis. 2 consecutive transmembrane segments (helical) span residues 498–518 (SHYL…VVLS) and 521–541 (EWDG…LVGW).

It belongs to the ABC1 family. UbiB subfamily.

It is found in the cell inner membrane. It participates in cofactor biosynthesis; ubiquinone biosynthesis [regulation]. In terms of biological role, is probably a protein kinase regulator of UbiI activity which is involved in aerobic coenzyme Q (ubiquinone) biosynthesis. This is Probable protein kinase UbiB from Erwinia tasmaniensis (strain DSM 17950 / CFBP 7177 / CIP 109463 / NCPPB 4357 / Et1/99).